Reading from the N-terminus, the 180-residue chain is Inosine/xanthosine triphosphatase (180 aa).

8–13 is a substrate binding site; it reads TTNPAK. Asp38 and Glu68 together coordinate Mg(2+). 68–69 is a binding site for substrate; the sequence is EA.

This sequence belongs to the YjjX NTPase family. Homodimer. It depends on Mg(2+) as a cofactor. Requires Mn(2+) as cofactor.

The catalysed reaction is XTP + H2O = XDP + phosphate + H(+). It carries out the reaction ITP + H2O = IDP + phosphate + H(+). Its function is as follows. Phosphatase that hydrolyzes non-canonical purine nucleotides such as XTP and ITP to their respective diphosphate derivatives. Probably excludes non-canonical purines from DNA/RNA precursor pool, thus preventing their incorporation into DNA/RNA and avoiding chromosomal lesions. The chain is Inosine/xanthosine triphosphatase from Yersinia pestis bv. Antiqua (strain Antiqua).